The following is a 445-amino-acid chain: Phosphatidate cytidylyltransferase 2 (445 aa).

A compositionally biased stretch (basic and acidic residues) spans 1–39 (MTELRQRVAREPEAPPEDKESESEAKADGETASDSESRV). Residues 1–52 (MTELRQRVAREPEAPPEDKESESEAKADGETASDSESRVEAVTQPPSADDTP) are disordered. Residue Ser21 is modified to Phosphoserine. Phosphothreonine is present on Thr31. Phosphoserine is present on residues Ser33, Ser35, and Ser37. Phosphothreonine is present on Thr51. 6 consecutive transmembrane segments (helical) span residues 79–99 (MIAFFFIIIYLGPMVLMMIVM), 132–152 (FLLCVNYFFYGETVTDYFFTL), 166–186 (HRFISFTLYLTGFCMFVLSLV), 213–233 (LVIHNLFEGMIWFIVPISCVI), 262–282 (GFIGGFFATVVFGLLLSYVMS), and 340–360 (IALSTFASLIGPFGGFFASGF).

It belongs to the CDS family. Homodimer.

It localises to the endoplasmic reticulum membrane. The catalysed reaction is a 1,2-diacyl-sn-glycero-3-phosphate + CTP + H(+) = a CDP-1,2-diacyl-sn-glycerol + diphosphate. It catalyses the reaction 1-octadecanoyl-2-(5Z,8Z,11Z,14Z-eicosatetraenoyl)-sn-glycero-3-phosphate + CTP + H(+) = 1-octadecanoyl-2-(5Z,8Z,11Z,14Z-eicosatetraenoyl)-sn-glycero-3-cytidine-5'-diphosphate + diphosphate. It carries out the reaction 1-octadecanoyl-2-(9Z,12Z-octadecadienoyl)-sn-glycero-3-phosphate + CTP + H(+) = 1-octadecanoyl-2-(9Z,12Z-octadecadienoyl)-sn-glycero-3-cytidine-5'-diphosphate + diphosphate. The enzyme catalyses 1-hexadecanoyl-2-(5Z,8Z,11Z,14Z-eicosatetraenoyl)-sn-glycero-3-phosphate + CTP + H(+) = 1-hexadecanoyl-2-(5Z,8Z,11Z,14Z-eicosatetraenoyl)-sn-glycero-3-cytidine-5'-diphosphate + diphosphate. The catalysed reaction is 1,2-di-(5Z,8Z,11Z,14Z)-eicosatetraenoyl-sn-glycero-3-phosphate + CTP + H(+) = 1,2-di-(5Z,8Z,11Z,14Z-eicosatetraenoyl)-sn-glycero-3-cytidine-5'-diphosphate + diphosphate. It catalyses the reaction 1-octadecanoyl-2-(9Z-octadecenoyl)-sn-glycero-3-phosphate + CTP + H(+) = 1-octadecanoyl-2-(9Z-octadecenoyl)-sn-glycero-3-cytidine-5'-diphosphate + diphosphate. It carries out the reaction 1-octadecanoyl-2-(4Z,7Z,10Z,13Z,16Z,19Z-docosahexaenoyl)-sn-glycero-3-phosphate + CTP + H(+) = 1-octadecanoyl-2-(4Z,7Z,10Z,13Z,16Z,19Z-docosahexaenoyl)-sn-glycero-3-cytidine-5'-diphosphate + diphosphate. The enzyme catalyses 1,2-di-(9Z,12Z-octadecadienoyl)-sn-glycero-3-phosphate + CTP + H(+) = 1,2-di-(9Z,12Z-octadecadienoyl)-sn-glycero-3-cytidine-5'-diphosphate + diphosphate. The catalysed reaction is 1,2-di-(9Z-octadecenoyl)-sn-glycero-3-phosphate + CTP + H(+) = 1,2-di-(9Z-octadecenoyl)-sn-glycero-3-cytidine-5'-diphosphate + diphosphate. It functions in the pathway phospholipid metabolism; CDP-diacylglycerol biosynthesis; CDP-diacylglycerol from sn-glycerol 3-phosphate: step 3/3. Functionally, catalyzes the conversion of phosphatidic acid (PA) to CDP-diacylglycerol (CDP-DAG), an essential intermediate in the synthesis of phosphatidylglycerol, cardiolipin and phosphatidylinositol. Exhibits specificity for the nature of the acyl chains at the sn-1 and sn-2 positions in the substrate, PA and the preferred acyl chain composition is 1-stearoyl-2-arachidonoyl-sn-phosphatidic acid. Plays an important role in regulating the growth and maturation of lipid droplets which are storage organelles at the center of lipid and energy homeostasis. The polypeptide is Phosphatidate cytidylyltransferase 2 (CDS2) (Bos taurus (Bovine)).